A 141-amino-acid chain; its full sequence is Nucleoside triphosphatase NudI (141 aa).

Residues 1-141 form the Nudix hydrolase domain; that stretch reads MRQRTIVCPL…RKTLRLKGLL (141 aa). Positions 38–59 match the Nudix box motif; sequence GGVEPGERIEEALRREIREELG.

This sequence belongs to the Nudix hydrolase family. NudI subfamily. In terms of assembly, monomer. Mg(2+) serves as cofactor.

The catalysed reaction is a ribonucleoside 5'-triphosphate + H2O = a ribonucleoside 5'-phosphate + diphosphate + H(+). The enzyme catalyses a 2'-deoxyribonucleoside 5'-triphosphate + H2O = a 2'-deoxyribonucleoside 5'-phosphate + diphosphate + H(+). It catalyses the reaction dUTP + H2O = dUMP + diphosphate + H(+). It carries out the reaction dTTP + H2O = dTMP + diphosphate + H(+). The catalysed reaction is dCTP + H2O = dCMP + diphosphate + H(+). In terms of biological role, catalyzes the hydrolysis of nucleoside triphosphates, with a preference for pyrimidine deoxynucleoside triphosphates (dUTP, dTTP and dCTP). The sequence is that of Nucleoside triphosphatase NudI from Escherichia coli O17:K52:H18 (strain UMN026 / ExPEC).